Here is a 683-residue protein sequence, read N- to C-terminus: Amino acid transporter heavy chain SLC3A1 (683 aa).

The span at 1–10 (MNEDKDKRDS) shows a compositional bias: basic and acidic residues. Residues 1 to 50 (MNEDKDKRDSIQMSMKGCRTNNGFVQNEDIQEQDPDSRDTPQSNAVSIPA) are disordered. At 1–86 (MNEDKDKRDS…ARYRVPREIL (86 aa)) the chain is on the cytoplasmic side. S10 is modified (phosphoserine). A helical; Signal-anchor for type II membrane protein membrane pass occupies residues 87-107 (FWLTVVSVFLLIGATIAIIII). Residues 108–683 (SPKCLDWWQA…SVLDLLYSSC (576 aa)) are Extracellular-facing. N211 lines the Ca(2+) pocket. 3 N-linked (GlcNAc...) asparagine glycosylation sites follow: N211, N238, and N258. C239 and C270 are joined by a disulfide. 4 residues coordinate Ca(2+): D281, F315, L316, and E318. N329 carries an N-linked (GlcNAc...) asparagine glycan. Residue S383 is modified to Phosphoserine. 3 N-linked (GlcNAc...) asparagine glycosylation sites follow: N510, N520, and N574. 2 disulfides stabilise this stretch: C568-C664 and C671-C683.

As to quaternary structure, disulfide-linked heterodimer composed of the catalytic light subunit SLC7A9 and the heavy subunit SLC3A1. The heterodimer is the minimal functional unit. Assembles in non-covalently linked heterotetramers (dimers of heterodimers) and higher order oligomers; the oligomerization is mediated by SLC3A1 likely to prevent degradation in the endoplasmic reticulum and facilitate heteromer trafficking to the plasma membrane. Disulfide-linked heterodimer composed of the catalytic light subunit SLC7A13 and the heavy subunit SLC3A1. In terms of tissue distribution, predominantly expressed in kidney and intestine. In kidney localized to the apical membrane of the proximal tubules.

The protein localises to the cell membrane. Its subcellular location is the apical cell membrane. In terms of biological role, acts as a chaperone that facilitates biogenesis and trafficking of functional transporter heteromers to the plasma membrane. Associates with SLC7A9 to form a functional transporter complex that mediates the electrogenic exchange between cationic amino acids and neutral amino acids, with a stoichiometry of 1:1. SLC7A9-SLC3A1 transporter has system b(0,+)-like activity with high affinity for extracellular cationic amino acids and L-cystine and lower affinity for intracellular neutral amino acids. Substrate exchange is driven by high concentration of intracellular neutral amino acids and the intracellular reduction of L-cystine to L-cysteine. SLC7A9-SLC3A1 acts as a major transporter for reabsorption of L-cystine and dibasic amino acids across the brush border membrane in early proximal tubules. Associates with SLC7A13 to form a functional complex that transports anionic and neutral amino acids via exchange or facilitated diffusion. SLC7A13-SLC3A1 may act as a major transporter for L-cystine in late proximal tubules, ensuring its reabsorption from the luminal fluid in exchange for cytosolic L-glutamate or L-aspartate. This Rattus norvegicus (Rat) protein is Amino acid transporter heavy chain SLC3A1 (Slc3a1).